The primary structure comprises 557 residues: ADP-ribosylation factor-binding protein GGA1 (557 aa).

The 137-residue stretch at 29 to 165 (ACRSTLPEPD…LLKYKGYTFP (137 aa)) folds into the VHS domain. Residues 192–317 (ERAQAAKLEE…LLKRYKSIKG (126 aa)) enclose the GAT domain. At T348 the chain carries Phosphothreonine. S353, S357, S378, and S394 each carry phosphoserine. The GAE domain occupies 440–556 (AQSQRHILNQ…EESGTTSLPT (117 aa)).

In terms of assembly, binds to ARF1 and ARF2.

The protein resides in the golgi apparatus. It localises to the trans-Golgi network. Its function is as follows. May play a role in the regulation of membrane traffic through the trans-Golgi network. This Saccharomyces cerevisiae (strain ATCC 204508 / S288c) (Baker's yeast) protein is ADP-ribosylation factor-binding protein GGA1 (GGA1).